Reading from the N-terminus, the 112-residue chain is B3 domain-containing protein At1g43171 (112 aa).

Residues 19-112 (DIVGNVALPK…FENKFIVLNF (94 aa)) constitute a DNA-binding region (TF-B3).

The protein localises to the nucleus. The chain is B3 domain-containing protein At1g43171 from Arabidopsis thaliana (Mouse-ear cress).